The sequence spans 298 residues: Probable tRNA(His) guanylyltransferase (298 aa).

Positions 58, 59, and 105 each coordinate Mg(2+). Residues 58-63 (DGRNFH) and 104-105 (SD) each bind GTP.

This sequence belongs to the tRNA(His) guanylyltransferase family. In terms of assembly, homotetramer. Interacts with MFN1 and MFN2; functions as a guanyl-nucleotide exchange factor/GEF for MFN2 and also probably MFN1. It depends on Mg(2+) as a cofactor. As to expression, expressed in many tissues.

The protein resides in the cytoplasm. It localises to the mitochondrion outer membrane. The enzyme catalyses a 5'-end ribonucleotide-tRNA(His) + GTP + ATP + H2O = a 5'-end phospho-guanosine-ribonucleotide-tRNA(His) + AMP + 2 diphosphate + H(+). Adds a GMP to the 5'-end of tRNA(His) after transcription and RNase P cleavage. This step is essential for proper recognition of the tRNA and for the fidelity of protein synthesis. Also functions as a guanyl-nucleotide exchange factor/GEF for the MFN1 and MFN2 mitofusins thereby regulating mitochondrial fusion. By regulating both mitochondrial dynamics and bioenergetic function, it contributes to cell survival following oxidative stress. In Homo sapiens (Human), this protein is Probable tRNA(His) guanylyltransferase (THG1L).